The following is a 517-amino-acid chain: Beta-glucosidase 1 (517 aa).

A signal peptide spans 1–22 (MEDVLTLITMIVLLLLAFHGFG). A beta-D-glucoside-binding positions include Gln48, His145, and 190 to 191 (NE). The Proton donor role is filled by Glu191. Cys210 and Cys217 are disulfide-bonded. Residues Asn216 and Asn221 are each glycosylated (N-linked (GlcNAc...) asparagine). Residues Tyr333 and Glu406 each coordinate a beta-D-glucoside. Residue Glu406 is the Nucleophile of the active site. An N-linked (GlcNAc...) asparagine glycan is attached at Asn441. A beta-D-glucoside contacts are provided by Trp451 and Phe467. 2 N-linked (GlcNAc...) asparagine glycosylation sites follow: Asn473 and Asn512.

Belongs to the glycosyl hydrolase 1 family.

The catalysed reaction is Hydrolysis of terminal, non-reducing beta-D-glucosyl residues with release of beta-D-glucose.. This Arabidopsis thaliana (Mouse-ear cress) protein is Beta-glucosidase 1.